A 78-amino-acid polypeptide reads, in one-letter code: Large ribosomal subunit protein bL28 (78 aa).

This sequence belongs to the bacterial ribosomal protein bL28 family.

In Treponema pallidum (strain Nichols), this protein is Large ribosomal subunit protein bL28 (rpmB).